A 332-amino-acid polypeptide reads, in one-letter code: Beta-ketoacyl-[acyl-carrier-protein] synthase III (332 aa).

Residues Cys-112 and His-252 contribute to the active site. The ACP-binding stretch occupies residues 253 to 257 (QANLR). Asn-282 is a catalytic residue.

The protein belongs to the thiolase-like superfamily. FabH family. In terms of assembly, homodimer.

It is found in the cytoplasm. It carries out the reaction malonyl-[ACP] + acetyl-CoA + H(+) = 3-oxobutanoyl-[ACP] + CO2 + CoA. It participates in lipid metabolism; fatty acid biosynthesis. Functionally, catalyzes the condensation reaction of fatty acid synthesis by the addition to an acyl acceptor of two carbons from malonyl-ACP. Catalyzes the first condensation reaction which initiates fatty acid synthesis and may therefore play a role in governing the total rate of fatty acid production. Possesses both acetoacetyl-ACP synthase and acetyl transacylase activities. Its substrate specificity determines the biosynthesis of branched-chain and/or straight-chain of fatty acids. This is Beta-ketoacyl-[acyl-carrier-protein] synthase III from Syntrophomonas wolfei subsp. wolfei (strain DSM 2245B / Goettingen).